Consider the following 92-residue polypeptide: Non-specific lipid-transfer protein A (92 aa).

Disulfide bonds link Cys3–Cys51, Cys13–Cys28, Cys29–Cys74, and Cys49–Cys88.

It belongs to the plant LTP family.

Its function is as follows. Plant non-specific lipid-transfer proteins transfer phospholipids as well as galactolipids across membranes. May play a role in wax or cutin deposition in the cell walls of expanding epidermal cells and certain secretory tissues. This Ricinus communis (Castor bean) protein is Non-specific lipid-transfer protein A.